A 348-amino-acid polypeptide reads, in one-letter code: Holliday junction branch migration complex subunit RuvB (348 aa).

Residues 4–184 (ADRLIAASGR…FGIVQRLEFY (181 aa)) form a large ATPase domain (RuvB-L) region. ATP contacts are provided by residues I23, R24, G65, K68, T69, T70, 131–133 (EDF), R174, Y184, and R221. Mg(2+) is bound at residue T69. A small ATPAse domain (RuvB-S) region spans residues 185-255 (NDKDLSTIVS…VADMALNLLD (71 aa)). The segment at 258-348 (ERGFDHSDRR…GGDFSGPGDE (91 aa)) is head domain (RuvB-H). Residues R294, R313, and R318 each coordinate DNA.

Belongs to the RuvB family. In terms of assembly, homohexamer. Forms an RuvA(8)-RuvB(12)-Holliday junction (HJ) complex. HJ DNA is sandwiched between 2 RuvA tetramers; dsDNA enters through RuvA and exits via RuvB. An RuvB hexamer assembles on each DNA strand where it exits the tetramer. Each RuvB hexamer is contacted by two RuvA subunits (via domain III) on 2 adjacent RuvB subunits; this complex drives branch migration. In the full resolvosome a probable DNA-RuvA(4)-RuvB(12)-RuvC(2) complex forms which resolves the HJ.

The protein localises to the cytoplasm. The catalysed reaction is ATP + H2O = ADP + phosphate + H(+). Its function is as follows. The RuvA-RuvB-RuvC complex processes Holliday junction (HJ) DNA during genetic recombination and DNA repair, while the RuvA-RuvB complex plays an important role in the rescue of blocked DNA replication forks via replication fork reversal (RFR). RuvA specifically binds to HJ cruciform DNA, conferring on it an open structure. The RuvB hexamer acts as an ATP-dependent pump, pulling dsDNA into and through the RuvAB complex. RuvB forms 2 homohexamers on either side of HJ DNA bound by 1 or 2 RuvA tetramers; 4 subunits per hexamer contact DNA at a time. Coordinated motions by a converter formed by DNA-disengaged RuvB subunits stimulates ATP hydrolysis and nucleotide exchange. Immobilization of the converter enables RuvB to convert the ATP-contained energy into a lever motion, pulling 2 nucleotides of DNA out of the RuvA tetramer per ATP hydrolyzed, thus driving DNA branch migration. The RuvB motors rotate together with the DNA substrate, which together with the progressing nucleotide cycle form the mechanistic basis for DNA recombination by continuous HJ branch migration. Branch migration allows RuvC to scan DNA until it finds its consensus sequence, where it cleaves and resolves cruciform DNA. The protein is Holliday junction branch migration complex subunit RuvB of Pseudomonas putida (strain ATCC 700007 / DSM 6899 / JCM 31910 / BCRC 17059 / LMG 24140 / F1).